A 637-amino-acid chain; its full sequence is tRNA uridine 5-carboxymethylaminomethyl modification enzyme MnmG (637 aa).

FAD-binding positions include 15-20, Val127, and Ser182; that span reads GAGHAG. 274 to 288 provides a ligand contact to NAD(+); it reads GPRYCPSIEDKVVRF. Gln371 is a binding site for FAD.

This sequence belongs to the MnmG family. Homodimer. Heterotetramer of two MnmE and two MnmG subunits. FAD is required as a cofactor.

The protein localises to the cytoplasm. Functionally, NAD-binding protein involved in the addition of a carboxymethylaminomethyl (cmnm) group at the wobble position (U34) of certain tRNAs, forming tRNA-cmnm(5)s(2)U34. This chain is tRNA uridine 5-carboxymethylaminomethyl modification enzyme MnmG, found in Heliobacterium modesticaldum (strain ATCC 51547 / Ice1).